A 420-amino-acid chain; its full sequence is ATP-dependent Clp protease ATP-binding subunit ClpX (420 aa).

A ClpX-type ZB domain is found at 4-57; it reads KTPGNNGKQKLFCSFCGKEQDAVKRLVAGPGVYICDECISLCNEIIAEDHEHSH. Positions 16, 19, 38, and 41 each coordinate Zn(2+). An ATP-binding site is contributed by 122–129; the sequence is PTGSGKTL.

It belongs to the ClpX chaperone family. As to quaternary structure, component of the ClpX-ClpP complex. Forms a hexameric ring that, in the presence of ATP, binds to fourteen ClpP subunits assembled into a disk-like structure with a central cavity, resembling the structure of eukaryotic proteasomes.

Functionally, ATP-dependent specificity component of the Clp protease. It directs the protease to specific substrates. Can perform chaperone functions in the absence of ClpP. The chain is ATP-dependent Clp protease ATP-binding subunit ClpX from Leptospira interrogans serogroup Icterohaemorrhagiae serovar copenhageni (strain Fiocruz L1-130).